The chain runs to 467 residues: UDP-N-acetylmuramate--L-alanine ligase (467 aa).

ATP is bound at residue 114–120; that stretch reads GTHGKTT.

The protein belongs to the MurCDEF family.

It is found in the cytoplasm. It carries out the reaction UDP-N-acetyl-alpha-D-muramate + L-alanine + ATP = UDP-N-acetyl-alpha-D-muramoyl-L-alanine + ADP + phosphate + H(+). Its pathway is cell wall biogenesis; peptidoglycan biosynthesis. In terms of biological role, cell wall formation. The chain is UDP-N-acetylmuramate--L-alanine ligase from Bradyrhizobium sp. (strain ORS 278).